Consider the following 622-residue polypeptide: Pyranose 2-oxidase (622 aa).

The N-terminal stretch at 1-28 is a signal peptide; sequence MSASSSDPFHSFAKTSFTSKAAKRATAH. The propeptide occupies 29 to 37; sequence SLPPLPGPG. Position 167 is a tele-8alpha-FAD histidine (His167). 2 residues coordinate substrate: Gln449 and His451. The Proton acceptor role is filled by His546. Asn591 is a catalytic residue.

The protein belongs to the GMC oxidoreductase family. Homotetramer. FAD serves as cofactor.

It is found in the periplasm. The catalysed reaction is D-glucose + O2 = 2-dehydro-D-glucose + H2O2. In terms of biological role, catalyzes the oxidation of various aldopyranoses and disaccharides on carbon-2 to the corresponding 2-keto sugars concomitant with the reduction of O(2) to H(2)O(2). Plays an important role in lignin degradation of wood rot fungi by supplying the essential cosubstrate H(2)O(2) for the ligninolytic peroxidases, lignin peroxidase and manganese-dependent peroxidase. The preferred substrate is D-glucose which is converted to 2-dehydro-D-glucose, an intermediate of a secondary metabolic pathway leading to the antibiotic cortalcerone. Also acts on D-xylose, together with D-glucose the major sugars derived from wood, on L-sorbose, D-galactose and 1,5-anhydroglucitol, a diagnostic marker of diabetes mellitus. This Trametes hirsuta (White-rot fungus) protein is Pyranose 2-oxidase (P2OX).